Reading from the N-terminus, the 101-residue chain is Movement protein (101 aa).

The chain crosses the membrane as a helical span at residues 30–50; that stretch reads EVAILSFVALICIYLLYLWVL. Residues 80 to 101 are disordered; sequence PIPNTLEPTAPVHPGPFVPGQG. Positions 90–101 are enriched in pro residues; that stretch reads PVHPGPFVPGQG.

Belongs to the mastrevirus movement protein family. In terms of assembly, interacts with the capsid protein (CP). Part of a MP-CP-viral DNA complex.

Its subcellular location is the host membrane. Involved in the viral transport within, and between cells. The chain is Movement protein from Avena sativa (Oat).